The chain runs to 438 residues: Aspartate--tRNA(Asp) ligase (438 aa).

An L-aspartate-binding site is contributed by glutamate 170. The aspartate stretch occupies residues 192–195; that stretch reads QLYK. Arginine 214 lines the L-aspartate pocket. Residues 214 to 216, 222 to 224, and glutamate 361 contribute to the ATP site; these read RAE and RHL. 2 residues coordinate Mg(2+): glutamate 361 and serine 364. Residues serine 364 and arginine 368 each coordinate L-aspartate. ATP is bound at residue 409 to 412; the sequence is GAER.

This sequence belongs to the class-II aminoacyl-tRNA synthetase family. Type 2 subfamily. Homodimer. The cofactor is Mg(2+).

The protein localises to the cytoplasm. The catalysed reaction is tRNA(Asp) + L-aspartate + ATP = L-aspartyl-tRNA(Asp) + AMP + diphosphate. Catalyzes the attachment of L-aspartate to tRNA(Asp) in a two-step reaction: L-aspartate is first activated by ATP to form Asp-AMP and then transferred to the acceptor end of tRNA(Asp). The sequence is that of Aspartate--tRNA(Asp) ligase from Pyrococcus abyssi (strain GE5 / Orsay).